The following is an 841-amino-acid chain: MPLRRFSPGLKAQFAFGMVFLFVQPDASAADISAQQIGGVIIPQAFSQALQDGMSVPLYIHLAGSQGRQDDQRIGSAFIWLDDGQLRIRKIQLEESEDNASVSEQTRQQLMTLANAPFNEALTIPLTDNAQLDLSLRQLLLQLVVKREALGTVLRSRSEDIGQSSVNTLSSNLSYNFGVYNNQLRNGGSNTSSYLSLNNVTALREHHVVLDGSLYGIGSGQQDSELYKAMYERDFAGHRFAGGMLDTWNLQSLGPMTAISAGKIYGLSWGNQASSTIFDSSQSATPVIAFLPAAGEVHLTRDGRLLSVQNFTMGNHEVDTRGLPYGIYDVEVEVIVNGRVISKRTQRVNKLFSRGRGVGAPLAWQIWGGSFHMDRWSENGKKTRPAKESWLAGASTSGSLSTFSWAATGYGYDNQAVGETRLTLPLGVAINVNLQNMLASDSSWSNIASISATLPGGFSSLWVNQEKTRIGNQLRRSDADNRAIGGTLNLNSLWSKLGTFSISYNDDRRYNSHYYTADYYQSVYSGTFGSLGLRAGIQRYNNGDSSANTGKYIALDLSLPLGNWFSAGMTHQNGYTMANLSARKQFDEGTIRTVGANLSRAISGDTGDDKTLSGGAYAQFDARYASGTLNVNSAADGYINTNLTANGSVGWQGKNIAASGRTDGNAGVIFDTGLENDGQISAKINGRIFPLNGKRNYLPLSPYGRYEVELQNSKNSLDSYDIVSGRKSHLTLYPGNVAVIEPEVKQMVTVSGRIRAEDGTLLANARINNHIGRTRTDENGEFVMDVDKKYPTIDFRYSGNKTCEVALELNQARGAVWVGDVVCSGLSSWAAVTQTGEENES.

Positions 1–29 (MPLRRFSPGLKAQFAFGMVFLFVQPDASA) are cleaved as a signal peptide.

It belongs to the EcpC/MatD family.

Part of the ecpRABCDE operon, which encodes the E.coli common pilus (ECP). ECP is found in both commensal and pathogenic strains and plays a dual role in early-stage biofilm development and host cell recognition. The sequence is that of Probable outer membrane usher protein EcpC (ecpC) from Escherichia coli O127:H6 (strain E2348/69 / EPEC).